The primary structure comprises 51 residues: Insulin (51 aa).

3 cysteine pairs are disulfide-bonded: C7–C37, C19–C50, and C36–C41.

It belongs to the insulin family. Heterodimer of a B chain and an A chain linked by two disulfide bonds.

It localises to the secreted. Functionally, insulin decreases blood glucose concentration. It increases cell permeability to monosaccharides, amino acids and fatty acids. It accelerates glycolysis, the pentose phosphate cycle, and glycogen synthesis in liver. This is Insulin (INS) from Saimiri sciureus (Common squirrel monkey).